We begin with the raw amino-acid sequence, 95 residues long: Beta-defensin 132 (95 aa).

The first 22 residues, 1–22 (MKFLLLVLAALRFLTQVIPASA), serve as a signal peptide directing secretion. Intrachain disulfides connect Cys-27/Cys-55, Cys-35/Cys-49, and Cys-39/Cys-56. Positions 72–95 (GNHWQSRRRNTQRKDKKQQTTVTS) are disordered. Residues 76–87 (QSRRRNTQRKDK) are compositionally biased toward basic residues.

It belongs to the beta-defensin family.

The protein resides in the secreted. Its function is as follows. Has antibacterial activity. In Pongo pygmaeus (Bornean orangutan), this protein is Beta-defensin 132 (DEFB132).